We begin with the raw amino-acid sequence, 408 residues long: Arylacetamide deacetylase-like 3 (408 aa).

The next 3 membrane-spanning stretches (helical) occupy residues 2 to 22, 46 to 66, and 109 to 129; these read VVLA…GSLL, ILSC…KLGL, and SSIP…IGSL. An Involved in the stabilization of the negatively charged intermediate by the formation of the oxyanion hole motif is present at residues 120–122; it reads HGG. The active site involves Ser194. Asn321 carries an N-linked (GlcNAc...) asparagine glycan. Active-site residues include Asp348 and His378.

It belongs to the 'GDXG' lipolytic enzyme family.

Its subcellular location is the membrane. In Mus musculus (Mouse), this protein is Arylacetamide deacetylase-like 3 (Aadacl3).